The sequence spans 213 residues: MTDKAHQCVIIGIAGASASGKSLIASTLYRELREQVGDQHIGVIPEDGYYKDQSHLSMEERVKTNYDHPSAMDHNLLLEHLQSLKAGKPIELPLYSYTEHTRKKETVHLEPKKVIILEGILLLTDIRLRQEMNFSIFVDTPLDICLMRRMKRDVNERGRSMDSVMAQYQKTVRPMFLQFIEPSKQYADIIVPRGGKNRIAIDILKAKISQFFE.

15–22 lines the ATP pocket; sequence GASASGKS.

It belongs to the uridine kinase family.

The protein localises to the cytoplasm. It catalyses the reaction uridine + ATP = UMP + ADP + H(+). It carries out the reaction cytidine + ATP = CMP + ADP + H(+). It participates in pyrimidine metabolism; CTP biosynthesis via salvage pathway; CTP from cytidine: step 1/3. It functions in the pathway pyrimidine metabolism; UMP biosynthesis via salvage pathway; UMP from uridine: step 1/1. The sequence is that of Uridine kinase from Yersinia enterocolitica serotype O:8 / biotype 1B (strain NCTC 13174 / 8081).